The primary structure comprises 531 residues: Acid-sensing ion channel 3 (531 aa).

The Cytoplasmic segment spans residues 1 to 43 (MKPTSGPEEARRPASDIRVFASNCSMHGLGHVFGPGSLSLRRG). A helical membrane pass occupies residues 44 to 61 (MWAAAVVLSVATFLYQVA). Residues 62 to 441 (ERVRYYREFH…SELLGDIGGQ (380 aa)) are Extracellular-facing. 7 disulfides stabilise this stretch: Cys-92-Cys-186, Cys-164-Cys-171, Cys-282-Cys-370, Cys-315-Cys-366, Cys-319-Cys-364, Cys-328-Cys-350, and Cys-330-Cys-342. Residue Asn-175 is glycosylated (N-linked (GlcNAc...) asparagine). The tract at residues 285 to 307 (ASLNPNYEPEPSDPLGSPSPSPS) is disordered. Asn-398 is a glycosylation site (N-linked (GlcNAc...) asparagine). Residues 442 to 460 (MGLFIGASLLTILEILDYL) form a helical membrane-spanning segment. The GAS motif; ion selectivity filter signature appears at 447–449 (GAS). At 461 to 531 (CEVFRDKVLG…HRTCYLVTQL (71 aa)) the chain is on the cytoplasmic side. A PDZ-binding motif is present at residues 528–531 (VTQL).

It belongs to the amiloride-sensitive sodium channel (TC 1.A.6) family. ASIC3 subfamily. Can form homotrimeric channels. Heterotrimer; forms functional heterotrimers producing channel with different properties. Forms heterotrimers with ASIC2; gives rise to a biphasic current with a sustained current which discriminates poorly between Na(+) and K(+). Interacts with STOM; inhibits ASIC3 acid-evoked current. Interacts with LIN7B (via PDZ domain); increases ASIC3 expression at the plasma membrane. Interacts with MAGI1 (via PDZ domain); probably regulates ASIC3. Interacts with GOPC (via PDZ domain); probably regulates ASIC3. Interacts with DLG4 (via PDZ domain); reduces ASIC3 expression at the plasma membrane. Expressed by sensory neurons. Strongly expressed in brain, spinal cord, lung, lymph nodes, kidney, pituitary, heart and testis.

The protein localises to the cell membrane. It is found in the cytoplasm. The enzyme catalyses Na(+)(in) = Na(+)(out). The catalysed reaction is K(+)(in) = K(+)(out). It carries out the reaction Ca(2+)(in) = Ca(2+)(out). Its activity is regulated as follows. Inhibited by the diuretic drug amiloride. Inhibited by the diuretic drug triamterene. Potentiated by the vertebrate neuropeptide FF (NPFF) and the related FMRFamide. Specifically and reversibly inhibited by the a sea anemone toxin APETx2. Functionally, forms pH-gated heterotrimeric sodium channels that act as postsynaptic excitatory receptors in the nervous system. Upon extracellular acidification, these channels generate a biphasic current with a fast inactivating and a slow sustained phase. ASIC3 is more sensitive to protons and gates between closed, open, and desensitized states faster than other ASICs. Displays high selectivity for sodium ions but can also permit the permeation of other cations. As a neuronal acid sensor, probably contributes to mechanoreception, acid nociception, and heat nociception. By forming heterotrimeric channels with ASIC2, generates a biphasic current with a fast inactivating and a slow sustained phase, which in sensory neurons is proposed to mediate the pain induced by acidosis that occurs in ischemic, damaged or inflamed tissues. The chain is Acid-sensing ion channel 3 from Homo sapiens (Human).